Reading from the N-terminus, the 173-residue chain is Protein-export protein SecB 1 (173 aa).

It belongs to the SecB family. In terms of assembly, homotetramer, a dimer of dimers. One homotetramer interacts with 1 SecA dimer.

The protein localises to the cytoplasm. In terms of biological role, one of the proteins required for the normal export of preproteins out of the cell cytoplasm. It is a molecular chaperone that binds to a subset of precursor proteins, maintaining them in a translocation-competent state. It also specifically binds to its receptor SecA. This chain is Protein-export protein SecB 1, found in Gluconobacter oxydans (strain 621H) (Gluconobacter suboxydans).